Here is a 550-residue protein sequence, read N- to C-terminus: Hydroxylamine reductase (550 aa).

4 residues coordinate [2Fe-2S] cluster: Cys3, Cys6, Cys18, and Cys25. Hybrid [4Fe-2O-2S] cluster contacts are provided by His249, Glu273, Cys317, Cys405, Cys433, Cys458, Glu492, and Lys494. Residue Cys405 is modified to Cysteine persulfide.

This sequence belongs to the HCP family. It depends on [2Fe-2S] cluster as a cofactor. Requires hybrid [4Fe-2O-2S] cluster as cofactor.

It is found in the cytoplasm. The enzyme catalyses A + NH4(+) + H2O = hydroxylamine + AH2 + H(+). Catalyzes the reduction of hydroxylamine to form NH(3) and H(2)O. The chain is Hydroxylamine reductase from Escherichia coli O6:K15:H31 (strain 536 / UPEC).